Consider the following 327-residue polypeptide: Aspartate--ammonia ligase (327 aa).

The protein belongs to the class-II aminoacyl-tRNA synthetase family. AsnA subfamily.

The protein localises to the cytoplasm. The enzyme catalyses L-aspartate + NH4(+) + ATP = L-asparagine + AMP + diphosphate + H(+). The protein operates within amino-acid biosynthesis; L-asparagine biosynthesis; L-asparagine from L-aspartate (ammonia route): step 1/1. The chain is Aspartate--ammonia ligase from Bacillus anthracis (strain A0248).